Reading from the N-terminus, the 265-residue chain is Acetylglutamate kinase (265 aa).

Substrate-binding positions include 41 to 42 (GG), Arg-63, and Asn-156.

This sequence belongs to the acetylglutamate kinase family. ArgB subfamily.

Its subcellular location is the cytoplasm. It carries out the reaction N-acetyl-L-glutamate + ATP = N-acetyl-L-glutamyl 5-phosphate + ADP. Its pathway is amino-acid biosynthesis; L-arginine biosynthesis; N(2)-acetyl-L-ornithine from L-glutamate: step 2/4. Functionally, catalyzes the ATP-dependent phosphorylation of N-acetyl-L-glutamate. This is Acetylglutamate kinase from Brevibacillus brevis (strain 47 / JCM 6285 / NBRC 100599).